The following is a 38-amino-acid chain: Photosystem II reaction center protein X (38 aa).

Residues 9–29 form a helical membrane-spanning segment; the sequence is IASLTAGALVLSAIGIALIII.

The protein belongs to the PsbX family. Type 1 subfamily. PSII is composed of 1 copy each of membrane proteins PsbA, PsbB, PsbC, PsbD, PsbE, PsbF, PsbH, PsbI, PsbJ, PsbK, PsbL, PsbM, PsbT, PsbX, PsbY, PsbZ, Psb30/Ycf12, at least 3 peripheral proteins of the oxygen-evolving complex and a large number of cofactors. It forms dimeric complexes.

It localises to the plastid. The protein localises to the chloroplast thylakoid membrane. Involved in the binding and/or turnover of quinones at the Q(B) site of photosystem II (PSII). PSII is a light-driven water plastoquinone oxidoreductase, using light energy to abstract electrons from H(2)O, generating a proton gradient subsequently used for ATP formation. The sequence is that of Photosystem II reaction center protein X from Thalassiosira pseudonana (Marine diatom).